The sequence spans 740 residues: F-BAR and double SH3 domains protein 2 (740 aa).

The 275-residue stretch at 8–282 folds into the F-BAR domain; sequence VKVTQELKNI…NSSKVVRDYN (275 aa). The interval 303–323 is disordered; sequence PCDSDTSRQLESETGTTEEHS. A compositionally biased stretch (basic and acidic residues) spans 307-323; it reads DTSRQLESETGTTEEHS. The stretch at 356–397 forms a coiled coil; sequence GAAVSEQSRAELEQKIDEARENIRKAEIIKLKAEARLDLLKQ. 2 SH3 domains span residues 469 to 530 and 567 to 629; these read NYPL…FPTS and ASVC…ELSA. Residues 567-629 are required and sufficient for location at clathrin-coated pits; it reads ASVCFVKALY…PSVLVEELSA (63 aa). Residues 633-740 form a disordered region; sequence GDTPWMREIQ…KIEDVEITLV (108 aa). Residues 646–657 show a composition bias toward pro residues; sequence SPKPHASLPPLP. Serine 675 and serine 681 each carry phosphoserine.

As to quaternary structure, homodimer. Interacts (via SH3 domain 2) with ITSN1 (via SH3 domain 4). Recruited to clathrin-coated pits during a mid-to-late stage of assembly via interaction with ITSN1. Interacts (via SH3 domain 1) with WASL. Interacts with WAS. Interacts with CASK and MAGI1. CASK inhibits interaction with MAGI1. Post-translationally, phosphorylated. Phosphorylation on a Ser residue is important for recruitment to the cell membrane and for its role in promoting endocytosis. Liver, brain, heart, placenta, skeletal muscle, pancreas, lung and kidney.

It is found in the cytoplasm. The protein localises to the cell junction. Its subcellular location is the membrane. The protein resides in the clathrin-coated pit. It localises to the cell membrane. It is found in the cell projection. The protein localises to the stereocilium. In terms of biological role, adapter protein that plays a role in endocytosis via clathrin-coated pits. Contributes to the internalization of cell surface receptors, such as integrin ITGB1 and transferrin receptor. Promotes endocytosis of EGFR in cancer cells, and thereby contributes to the down-regulation of EGFR signaling. Recruited to clathrin-coated pits during a mid-to-late stage of assembly, where it is required for normal progress from U-shaped intermediate stage pits to terminal, omega-shaped pits. Binds to membranes enriched in phosphatidylinositol 3,4-bisphosphate or phosphatidylinositol 3,4,5-trisphosphate. When bound to membranes, promotes actin polymerization via its interaction with WAS and/or WASL which leads to the activation of the Arp2/3 complex. Does not promote actin polymerisation in the absence of membranes. This chain is F-BAR and double SH3 domains protein 2 (FCHSD2), found in Homo sapiens (Human).